The following is a 92-amino-acid chain: Small ribosomal subunit protein uS19c (92 aa).

It belongs to the universal ribosomal protein uS19 family.

Its subcellular location is the plastid. It is found in the chloroplast. Its function is as follows. Protein S19 forms a complex with S13 that binds strongly to the 16S ribosomal RNA. The protein is Small ribosomal subunit protein uS19c of Fagopyrum esculentum subsp. ancestrale (Wild buckwheat).